Consider the following 217-residue polypeptide: Deoxyribose-phosphate aldolase (217 aa).

The active-site Proton donor/acceptor is D89. Residue K151 is the Schiff-base intermediate with acetaldehyde of the active site. The active-site Proton donor/acceptor is K180.

The protein belongs to the DeoC/FbaB aldolase family. DeoC type 1 subfamily.

Its subcellular location is the cytoplasm. It catalyses the reaction 2-deoxy-D-ribose 5-phosphate = D-glyceraldehyde 3-phosphate + acetaldehyde. It functions in the pathway carbohydrate degradation; 2-deoxy-D-ribose 1-phosphate degradation; D-glyceraldehyde 3-phosphate and acetaldehyde from 2-deoxy-alpha-D-ribose 1-phosphate: step 2/2. Its function is as follows. Catalyzes a reversible aldol reaction between acetaldehyde and D-glyceraldehyde 3-phosphate to generate 2-deoxy-D-ribose 5-phosphate. The sequence is that of Deoxyribose-phosphate aldolase from Mycoplasma mobile (strain ATCC 43663 / 163K / NCTC 11711) (Mesomycoplasma mobile).